A 1777-amino-acid polypeptide reads, in one-letter code: Non-reducing polyketide synthase nscA (1777 aa).

The segment at aspartate 27–histidine 261 is N-terminal acylcarrier protein transacylase domain (SAT). Residues serine 396–aspartate 829 form the Ketosynthase family 3 (KS3) domain. Residues cysteine 569, histidine 704, and histidine 747 each act as for beta-ketoacyl synthase activity in the active site. The malonyl-CoA:ACP transacylase (MAT) domain stretch occupies residues alanine 934–glutamate 1212. The tract at residues threonine 1297–proline 1616 is product template (PT) domain. An N-terminal hotdog fold region spans residues histidine 1301–alanine 1437. Residues histidine 1301–aspartate 1611 enclose the PKS/mFAS DH domain. The active-site Proton acceptor; for dehydratase activity is the histidine 1333. The tract at residues alanine 1465–aspartate 1611 is C-terminal hotdog fold. The active-site Proton donor; for dehydratase activity is aspartate 1522. A disordered region spans residues leucine 1674 to serine 1704. The span at threonine 1677 to proline 1688 shows a compositional bias: low complexity. The region spanning proline 1700–cysteine 1777 is the Carrier domain. The residue at position 1737 (serine 1737) is an O-(pantetheine 4'-phosphoryl)serine.

Pantetheine 4'-phosphate serves as cofactor.

It participates in secondary metabolite biosynthesis. Functionally, non-reducing polyketide synthase; part of the gene cluster that mediates the biosynthesis of neosartoricin B, a prenylated anthracenone that probably exhibits T-cell antiproliferative activity, suggestive of a physiological role as an immunosuppressive agent. The non-reducing polyketide synthase nscA probably synthesizes and cyclizes the decaketide backbone. The hydrolase nscB then mediates the product release through hydrolysis followed by spontaneous decarboxylation. The prenyltransferase nscD catalyzes the addition of the dimethylallyl group to the aromatic C5. The FAD-dependent monooxygenase nscC is then responsible for the stereospecific hydroxylation at C2. Neosartoricin B can be converted into two additional compounds neosartoricins C and D. Neosartoricin C is a spirocyclic compound that is cyclized through the attack of C3 hydroxyl on C14, followed by dehydration. On the other hand, neosartoricin D is a further cyclized compound in which attack of C2 on C14 in neosartoricin C results in the formation of the acetal-containing dioxabicyclo-octanone ring. Both of these compounds are novel and possibly represent related metabolites of the gene cluster. The polypeptide is Non-reducing polyketide synthase nscA (Trichophyton equinum (strain ATCC MYA-4606 / CBS 127.97) (Horse ringworm fungus)).